A 489-amino-acid chain; its full sequence is N-succinylglutamate 5-semialdehyde dehydrogenase 1 (489 aa).

Position 223–228 (223–228 (GSSRTG)) interacts with NAD(+). Active-site residues include Glu246 and Cys280.

It belongs to the aldehyde dehydrogenase family. AstD subfamily.

The catalysed reaction is N-succinyl-L-glutamate 5-semialdehyde + NAD(+) + H2O = N-succinyl-L-glutamate + NADH + 2 H(+). It functions in the pathway amino-acid degradation; L-arginine degradation via AST pathway; L-glutamate and succinate from L-arginine: step 4/5. Functionally, catalyzes the NAD-dependent reduction of succinylglutamate semialdehyde into succinylglutamate. This Pseudoalteromonas translucida (strain TAC 125) protein is N-succinylglutamate 5-semialdehyde dehydrogenase 1.